A 920-amino-acid polypeptide reads, in one-letter code: Puromycin-sensitive aminopeptidase (920 aa).

Substrate-binding positions include Glu-181 and 317 to 321 (GAMEN). His-353 serves as a coordination point for Zn(2+). Glu-354 serves as the catalytic Proton acceptor. Zn(2+)-binding residues include His-357 and Glu-376. Tyr-465 is subject to 3'-nitrotyrosine. The Nuclear localization signal signature appears at 727–731 (RRRFK).

This sequence belongs to the peptidase M1 family. As to quaternary structure, monomer. It depends on Zn(2+) as a cofactor. As to expression, widely expressed. Highest expression in brain, particularly the striatum and hippocampus. Expressed in Sertoli cells.

It localises to the cytoplasm. The protein resides in the cytosol. The protein localises to the nucleus. The enzyme catalyses Release of an N-terminal amino acid, preferentially alanine, from a wide range of peptides, amides and arylamides.. Its activity is regulated as follows. Strongly inhibited by bestatin, leuhistin, actinonin, amastatin, 1,10-phenanthroline, DFP, PCMBS, Zn(2+), Cd(2+), Co(2+), Cu(2+), Hg(2+), EDTA and puromycin. Not inhibited by PMSF, and only slightly inhibited by leupeptin and aprotinin. Activity is increased by Mg(2+) and Ca(2+). Aminopeptidase with broad substrate specificity for several peptides. Involved in proteolytic events essential for cell growth and viability. May act as regulator of neuropeptide activity. Plays a role in the antigen-processing pathway for MHC class I molecules. Involved in the N-terminal trimming of cytotoxic T-cell epitope precursors. Digests the poly-Q peptides found in many cellular proteins. The chain is Puromycin-sensitive aminopeptidase (Npepps) from Mus musculus (Mouse).